We begin with the raw amino-acid sequence, 334 residues long: Phosphatidylglycerol--prolipoprotein diacylglyceryl transferase (334 aa).

Helical transmembrane passes span 22-42 (FLPFRIQTYALIILTGIVVAA), 54-74 (AEPGVVLDVLLWAVPLGIIGA), 105-125 (IWEGGNAIFGALIGGAVGVGI), and 131-151 (GLRFWTFADALAPALLLAQAI). Arg-153 is a binding site for a 1,2-diacyl-sn-glycero-3-phospho-(1'-sn-glycerol). Helical transmembrane passes span 191 to 211 (LFQPLFLYEIVWNVIGVFVIL) and 251 to 271 (FLGIPSNVWAAFAAVVLGAII). The disordered stretch occupies residues 296–334 (PQAEVESGETDPEEILHADDDEERTGTHKPQATSLSGSN). The span at 301-318 (ESGETDPEEILHADDDEE) shows a compositional bias: acidic residues. Positions 323 to 334 (HKPQATSLSGSN) are enriched in polar residues.

Belongs to the Lgt family.

It is found in the cell membrane. It carries out the reaction L-cysteinyl-[prolipoprotein] + a 1,2-diacyl-sn-glycero-3-phospho-(1'-sn-glycerol) = an S-1,2-diacyl-sn-glyceryl-L-cysteinyl-[prolipoprotein] + sn-glycerol 1-phosphate + H(+). The protein operates within protein modification; lipoprotein biosynthesis (diacylglyceryl transfer). In terms of biological role, catalyzes the transfer of the diacylglyceryl group from phosphatidylglycerol to the sulfhydryl group of the N-terminal cysteine of a prolipoprotein, the first step in the formation of mature lipoproteins. The polypeptide is Phosphatidylglycerol--prolipoprotein diacylglyceryl transferase (Leifsonia xyli subsp. xyli (strain CTCB07)).